The chain runs to 608 residues: 1-deoxy-D-xylulose-5-phosphate synthase (608 aa).

Residues His-66 and 107 to 109 (GHA) contribute to the thiamine diphosphate site. Residue Asp-138 coordinates Mg(2+). Thiamine diphosphate-binding positions include 139 to 140 (GA), Asn-167, Phe-277, and Glu-350. Asn-167 is a binding site for Mg(2+).

Belongs to the transketolase family. DXPS subfamily. In terms of assembly, homodimer. It depends on Mg(2+) as a cofactor. Thiamine diphosphate is required as a cofactor.

The catalysed reaction is D-glyceraldehyde 3-phosphate + pyruvate + H(+) = 1-deoxy-D-xylulose 5-phosphate + CO2. It functions in the pathway metabolic intermediate biosynthesis; 1-deoxy-D-xylulose 5-phosphate biosynthesis; 1-deoxy-D-xylulose 5-phosphate from D-glyceraldehyde 3-phosphate and pyruvate: step 1/1. In terms of biological role, catalyzes the acyloin condensation reaction between C atoms 2 and 3 of pyruvate and glyceraldehyde 3-phosphate to yield 1-deoxy-D-xylulose-5-phosphate (DXP). In Thermotoga maritima (strain ATCC 43589 / DSM 3109 / JCM 10099 / NBRC 100826 / MSB8), this protein is 1-deoxy-D-xylulose-5-phosphate synthase.